A 257-amino-acid polypeptide reads, in one-letter code: Homeobox protein goosecoid (257 aa).

The homeobox DNA-binding region spans 160–219; sequence KRRHRTIFTDEQLEALENLFQETKYPDVGTREQLARKVHLREEKVEVWFKNRRAKWRRQK. The disordered stretch occupies residues 213 to 257; sequence AKWRRQKRSSSEESENAEKWNKTSSSKASPEKREEEGKSDLDSDS. Residues 241-257 show a composition bias toward basic and acidic residues; it reads SPEKREEEGKSDLDSDS.

Belongs to the paired homeobox family. Bicoid subfamily.

The protein localises to the nucleus. Regulates chordin (CHRD). May play a role in spatial programing within discrete embryonic fields or lineage compartments during organogenesis. In concert with NKX3-2, plays a role in defining the structural components of the middle ear; required for the development of the entire tympanic ring. Probably involved in the regulatory networks that define neural crest cell fate specification and determine mesoderm cell lineages in mammals. This is Homeobox protein goosecoid (GSC) from Saguinus labiatus (Red-chested mustached tamarin).